The sequence spans 454 residues: Tubulin beta-3 chain (454 aa).

Gln11, Glu75, Ser144, Gly148, Thr149, Gly150, Asn210, and Asn232 together coordinate GTP. Glu75 is a binding site for Mg(2+). The tract at residues 435–454 (TADDEFDPEVNQEEVEGDCI) is disordered.

Belongs to the tubulin family. In terms of assembly, dimer of alpha and beta chains. A typical microtubule is a hollow water-filled tube with an outer diameter of 25 nm and an inner diameter of 15 nM. Alpha-beta heterodimers associate head-to-tail to form protofilaments running lengthwise along the microtubule wall with the beta-tubulin subunit facing the microtubule plus end conferring a structural polarity. Microtubules usually have 13 protofilaments but different protofilament numbers can be found in some organisms and specialized cells. Requires Mg(2+) as cofactor.

It is found in the cytoplasm. It localises to the cytoskeleton. In terms of biological role, tubulin is the major constituent of microtubules, a cylinder consisting of laterally associated linear protofilaments composed of alpha- and beta-tubulin heterodimers. Microtubules grow by the addition of GTP-tubulin dimers to the microtubule end, where a stabilizing cap forms. Below the cap, tubulin dimers are in GDP-bound state, owing to GTPase activity of alpha-tubulin. The protein is Tubulin beta-3 chain (betaTub60D) of Drosophila melanogaster (Fruit fly).